We begin with the raw amino-acid sequence, 882 residues long: Pentatricopeptide repeat-containing protein At3g03580 (882 aa).

PPR repeat units lie at residues 3-37 (TRVS…GLDS), 38-68 (SDFF…VSPA), 70-104 (NVYL…KVSP), 105-139 (DKYT…GFES), 140-170 (DLFV…MPVR), 171-205 (DLVS…WIVP), 206-240 (DSFT…GVNS), 241-271 (VVVV…MDVR), 272-307 (DSVS…KPDL), 309-340 (TVSS…GFVL), 341-371 (ESTV…MECK), 372-406 (DTVS…EEQA), 407-441 (DHIT…GICI), 442-472 (DLSV…MGTG), 473-507 (DTVT…EVVP), 508-542 (DMAT…GYES), 543-573 (ELQI…MSRR), 574-608 (DVVT…GIVP), 609-639 (DSVV…MKTH), and 645-675 (MIEH…MPIK). Positions 680 to 755 (IWASVLRACR…NPGYSWIEVG (76 aa)) are type E motif. Residues 756-786 (KNVHVFSSGDDSAPQSEAIYKSLEILYSLMA) form a type E(+) motif region. The tract at residues 787–882 (KEGYIPDPRE…DGTCSCKDRW (96 aa)) is type DYW motif.

It belongs to the PPR family. PCMP-H subfamily.

The sequence is that of Pentatricopeptide repeat-containing protein At3g03580 (PCMP-H23) from Arabidopsis thaliana (Mouse-ear cress).